A 419-amino-acid chain; its full sequence is L-cysteine:1D-myo-inositol 2-amino-2-deoxy-alpha-D-glucopyranoside ligase (419 aa).

Residues 1–20 (MRSWSVPEVPALPGRGPRVH) form a disordered region. Cys44 contacts Zn(2+). Residues 44–47 (CGIT), Thr59, and 82–84 (NVT) contribute to the L-cysteinyl-5'-AMP site. Residues 46–56 (ITPYDATHLGH) carry the 'HIGH' region motif. The 'ERGGDP' region motif lies at 191 to 196 (ERGGDP). An L-cysteinyl-5'-AMP-binding site is contributed by Trp232. Cys236 is a binding site for Zn(2+). An L-cysteinyl-5'-AMP-binding site is contributed by 254-256 (GSD). Residue His261 coordinates Zn(2+). An L-cysteinyl-5'-AMP-binding site is contributed by Val289. A 'KMSKS' region motif is present at residues 295–299 (KMSKS).

It belongs to the class-I aminoacyl-tRNA synthetase family. MshC subfamily. Monomer. Zn(2+) is required as a cofactor.

The catalysed reaction is 1D-myo-inositol 2-amino-2-deoxy-alpha-D-glucopyranoside + L-cysteine + ATP = 1D-myo-inositol 2-(L-cysteinylamino)-2-deoxy-alpha-D-glucopyranoside + AMP + diphosphate + H(+). In terms of biological role, catalyzes the ATP-dependent condensation of GlcN-Ins and L-cysteine to form L-Cys-GlcN-Ins. This chain is L-cysteine:1D-myo-inositol 2-amino-2-deoxy-alpha-D-glucopyranoside ligase, found in Kineococcus radiotolerans (strain ATCC BAA-149 / DSM 14245 / SRS30216).